We begin with the raw amino-acid sequence, 231 residues long: Uridylate kinase (231 aa).

6–9 (KLSG) is a binding site for ATP. The segment at 14 to 19 (GEGGRG) is involved in allosteric activation by GTP. ATP contacts are provided by Gly-49 and Arg-53. Residues Asp-66 and 127–134 (TSNPFFTT) each bind UMP. 3 residues coordinate ATP: Thr-154, Tyr-160, and Asp-163.

Belongs to the UMP kinase family. In terms of assembly, homohexamer.

It is found in the cytoplasm. It catalyses the reaction UMP + ATP = UDP + ADP. It participates in pyrimidine metabolism; CTP biosynthesis via de novo pathway; UDP from UMP (UMPK route): step 1/1. Allosterically activated by GTP. Inhibited by UTP. In terms of biological role, catalyzes the reversible phosphorylation of UMP to UDP. The chain is Uridylate kinase from Thermotoga maritima (strain ATCC 43589 / DSM 3109 / JCM 10099 / NBRC 100826 / MSB8).